We begin with the raw amino-acid sequence, 346 residues long: UDP-N-acetylenolpyruvoylglucosamine reductase (346 aa).

One can recognise an FAD-binding PCMH-type domain in the interval 22–194 (GFDVRARFAC…TSVTFRLPKV (173 aa)). R170 is an active-site residue. The active-site Proton donor is the S246. E342 is an active-site residue.

It belongs to the MurB family. Requires FAD as cofactor.

It localises to the cytoplasm. It carries out the reaction UDP-N-acetyl-alpha-D-muramate + NADP(+) = UDP-N-acetyl-3-O-(1-carboxyvinyl)-alpha-D-glucosamine + NADPH + H(+). Its pathway is cell wall biogenesis; peptidoglycan biosynthesis. Functionally, cell wall formation. This is UDP-N-acetylenolpyruvoylglucosamine reductase from Paraburkholderia xenovorans (strain LB400).